The chain runs to 633 residues: MDLLSIQDPSFLKKMSIEQLEELSEEIRNFLITSLSASGGHIGPNLGVVELTIALHKEFDSPKDKFLWDVGHQSYVHKLLTGRGKEFETLRQYKGLCGFPKRSESEHDVWETGHSSTSLSGAMGMAAARDIKGSKEYIIPIIGDGALTGGMALEALNHIGDEKKDMIVILNDNEMSIAPNVGAIHSMLGRLRTAGKYQWVKDELEYLFKRIPAVGGKLAATAERIKDSLKYMLVSGMFFEELGFTYLGPVDGHSYHELFENLQYAKKTKGPVLLHVITKKGKGYKPAETDTIGTWHGTGPYKINTGDFVKPKAAAPSWSGLVSGTVQELAREDDRIVAITPAMPVGSKLEGFAKEFPERMFDVGIAEQHAATMAAGMALQGMKPFLAIYSTFLQRAYDQVVHDICRQNANVFIGIDRAGLVGADGETHQGVFDIAFLRHIPNLVLMMPKDENEGRHMVNTALNYEEGPIAMRFPRGNGLGVKMDKELKTIPIGTWEVLRPGKDAVILTFGTTIEMALEAAEELQKEGLSVRVVNARFIKPIDKQMMKAILNEGLPILTIEEAVLEGGFGSTILEYAHDLGMYHTPIDRMGIPDRFIEHGSVTALLEEIGLTKAEVMNRIKLLMPPKTHKGIGS.

Thiamine diphosphate is bound by residues His-72 and 113-115 (GHS). Mg(2+) is bound at residue Asp-144. Thiamine diphosphate is bound by residues 145-146 (GA), Asn-173, Tyr-284, and Glu-367. A Mg(2+)-binding site is contributed by Asn-173.

This sequence belongs to the transketolase family. DXPS subfamily. Homodimer. Requires Mg(2+) as cofactor. The cofactor is thiamine diphosphate.

The enzyme catalyses D-glyceraldehyde 3-phosphate + pyruvate + H(+) = 1-deoxy-D-xylulose 5-phosphate + CO2. Its pathway is metabolic intermediate biosynthesis; 1-deoxy-D-xylulose 5-phosphate biosynthesis; 1-deoxy-D-xylulose 5-phosphate from D-glyceraldehyde 3-phosphate and pyruvate: step 1/1. Its function is as follows. Catalyzes the acyloin condensation reaction between C atoms 2 and 3 of pyruvate and glyceraldehyde 3-phosphate to yield 1-deoxy-D-xylulose-5-phosphate (DXP). The polypeptide is 1-deoxy-D-xylulose-5-phosphate synthase (Bacillus velezensis (strain DSM 23117 / BGSC 10A6 / LMG 26770 / FZB42) (Bacillus amyloliquefaciens subsp. plantarum)).